Consider the following 122-residue polypeptide: Large ribosomal subunit protein uL14 (122 aa).

This sequence belongs to the universal ribosomal protein uL14 family. Part of the 50S ribosomal subunit. Forms a cluster with proteins L3 and L19. In the 70S ribosome, L14 and L19 interact and together make contacts with the 16S rRNA in bridges B5 and B8.

Functionally, binds to 23S rRNA. Forms part of two intersubunit bridges in the 70S ribosome. The polypeptide is Large ribosomal subunit protein uL14 (Desulforapulum autotrophicum (strain ATCC 43914 / DSM 3382 / VKM B-1955 / HRM2) (Desulfobacterium autotrophicum)).